Consider the following 303-residue polypeptide: Guanosine-inosine kinase (303 aa).

Belongs to the carbohydrate kinase PfkB family. In terms of assembly, homodimer. Mg(2+) is required as a cofactor.

The enzyme catalyses guanosine + ATP = GMP + ADP + H(+). It carries out the reaction inosine + ATP = IMP + ADP + H(+). Its pathway is purine metabolism; IMP biosynthesis via salvage pathway; IMP from inosine: step 1/1. The protein operates within purine metabolism; GMP biosynthesis via salvage pathway. Its activity is regulated as follows. Kinase activity is stimulated by pyrimidine nucleotides, especially CMP and CTP, and inhibited by AMP, ADP and GMP. Activity is stimulated by potassium or ammonium ions. Functionally, catalyzes the phosphorylation of guanosine and inosine to GMP and IMP, respectively. Can also use deoxyguanosine. Shows a strong preference for guanosine. dATP, GTP and dGTP can serve as phosphate donors. This chain is Guanosine-inosine kinase, found in Exiguobacterium acetylicum (Brevibacterium acetylicum).